The primary structure comprises 357 residues: N-acetyl-gamma-glutamyl-phosphate reductase (357 aa).

The active site involves Cys-160.

The protein belongs to the NAGSA dehydrogenase family. Type 1 subfamily.

The protein localises to the cytoplasm. The catalysed reaction is N-acetyl-L-glutamate 5-semialdehyde + phosphate + NADP(+) = N-acetyl-L-glutamyl 5-phosphate + NADPH + H(+). The protein operates within amino-acid biosynthesis; L-arginine biosynthesis; N(2)-acetyl-L-ornithine from L-glutamate: step 3/4. Its function is as follows. Catalyzes the NADPH-dependent reduction of N-acetyl-5-glutamyl phosphate to yield N-acetyl-L-glutamate 5-semialdehyde. This chain is N-acetyl-gamma-glutamyl-phosphate reductase, found in Parasynechococcus marenigrum (strain WH8102).